The chain runs to 405 residues: Replication factor C large subunit (405 aa).

ATP is bound at residue 47-54 (GPPGVGKT).

It belongs to the activator 1 small subunits family. RfcL subfamily. In terms of assembly, heteromultimer composed of small subunits (RfcS) and large subunits (RfcL).

In terms of biological role, part of the RFC clamp loader complex which loads the PCNA sliding clamp onto DNA. This is Replication factor C large subunit from Saccharolobus islandicus (strain M.16.4 / Kamchatka #3) (Sulfolobus islandicus).